Here is a 492-residue protein sequence, read N- to C-terminus: Tyrosine--tRNA ligase, mitochondrial (492 aa).

Tyrosine 89 is a binding site for L-tyrosine. Position 93 (aspartate 93) interacts with ATP. The short motif at 94-103 (PTAQSLHLGN) is the 'HIGH' region element. 5 residues coordinate L-tyrosine: aspartate 133, tyrosine 239, glutamine 243, aspartate 246, and glutamine 265. The short motif at 303–307 (KFGKS) is the 'KMSKS' region element. Lysine 306 serves as a coordination point for ATP.

The protein belongs to the class-I aminoacyl-tRNA synthetase family. In terms of assembly, homodimer.

Its subcellular location is the mitochondrion matrix. The catalysed reaction is tRNA(Tyr) + L-tyrosine + ATP = L-tyrosyl-tRNA(Tyr) + AMP + diphosphate + H(+). Catalyzes the attachment of tyrosine to tRNA(Tyr) in a two-step reaction: tyrosine is first activated by ATP to form Tyr-AMP and then transferred to the acceptor end of tRNA(Tyr). The polypeptide is Tyrosine--tRNA ligase, mitochondrial (MSY1) (Saccharomyces cerevisiae (strain ATCC 204508 / S288c) (Baker's yeast)).